Here is a 383-residue protein sequence, read N- to C-terminus: Podocin (383 aa).

Residues Met1–Ala41 are compositionally biased toward basic and acidic residues. The segment at Met1–Glu76 is disordered. The Cytoplasmic segment spans residues Met1–Glu102. A lipid anchor (S-palmitoyl cysteine) is attached at Cys101. The stretch at Trp103 to Phe123 is an intramembrane region. Topologically, residues Cys124–Leu383 are cytoplasmic. Gln287 carries N-linked (GlcNAc...) asparagine glycosylation. Residues Asn355–Leu383 are disordered. A compositionally biased stretch (basic and acidic residues) spans Asn374–Leu383.

This sequence belongs to the band 7/mec-2 family. As to quaternary structure, interacts with nephrin/NPHS1 and KIRREL1. Interacts directly with CD2AP. Interacts with DDN. Glycosylated. Almost exclusively expressed in the podocytes of fetal and mature kidney glomeruli.

Its subcellular location is the cell membrane. The protein resides in the endoplasmic reticulum. In terms of biological role, plays a role in the regulation of glomerular permeability, acting probably as a linker between the plasma membrane and the cytoskeleton. The polypeptide is Podocin (NPHS2) (Homo sapiens (Human)).